The sequence spans 685 residues: DNA ligase (685 aa).

Residues 47 to 51, 96 to 97, and Glu125 contribute to the NAD(+) site; these read DSEYD and SL. Lys127 serves as the catalytic N6-AMP-lysine intermediate. 4 residues coordinate NAD(+): Arg148, Glu185, Lys304, and Lys328. The Zn(2+) site is built by Cys422, Cys425, Cys440, and Cys446. Residues 605 to 685 form the BRCT domain; the sequence is ADAQPLKGQT…ELLALLAANA (81 aa).

It belongs to the NAD-dependent DNA ligase family. LigA subfamily. It depends on Mg(2+) as a cofactor. The cofactor is Mn(2+).

The catalysed reaction is NAD(+) + (deoxyribonucleotide)n-3'-hydroxyl + 5'-phospho-(deoxyribonucleotide)m = (deoxyribonucleotide)n+m + AMP + beta-nicotinamide D-nucleotide.. Functionally, DNA ligase that catalyzes the formation of phosphodiester linkages between 5'-phosphoryl and 3'-hydroxyl groups in double-stranded DNA using NAD as a coenzyme and as the energy source for the reaction. It is essential for DNA replication and repair of damaged DNA. The chain is DNA ligase from Shewanella baltica (strain OS195).